The primary structure comprises 311 residues: Small ribosomal subunit biogenesis GTPase RsgA (311 aa).

A CP-type G domain is found at serine 88–phenylalanine 246. Residues asparagine 137 to aspartate 140 and glycine 188 to threonine 196 contribute to the GTP site. The Zn(2+) site is built by cysteine 270, cysteine 275, histidine 277, and cysteine 283.

This sequence belongs to the TRAFAC class YlqF/YawG GTPase family. RsgA subfamily. In terms of assembly, monomer. Associates with 30S ribosomal subunit, binds 16S rRNA. The cofactor is Zn(2+).

The protein resides in the cytoplasm. In terms of biological role, one of several proteins that assist in the late maturation steps of the functional core of the 30S ribosomal subunit. Helps release RbfA from mature subunits. May play a role in the assembly of ribosomal proteins into the subunit. Circularly permuted GTPase that catalyzes slow GTP hydrolysis, GTPase activity is stimulated by the 30S ribosomal subunit. The sequence is that of Small ribosomal subunit biogenesis GTPase RsgA from Chlorobaculum parvum (strain DSM 263 / NCIMB 8327) (Chlorobium vibrioforme subsp. thiosulfatophilum).